The following is a 647-amino-acid chain: Acetyl-coenzyme A synthetase (647 aa).

CoA contacts are provided by residues Arg190–Arg193 and Thr310. ATP-binding positions include Gly386–Pro388, Asp410–Thr415, Asp499, and Arg514. Ser522 is a CoA binding site. Arg525 lines the ATP pocket. Mg(2+) contacts are provided by Val536, His538, and Val541. Arg583 contributes to the CoA binding site. At Lys608 the chain carries N6-acetyllysine.

This sequence belongs to the ATP-dependent AMP-binding enzyme family. The cofactor is Mg(2+). Acetylated. Deacetylation by the SIR2-homolog deacetylase activates the enzyme.

The enzyme catalyses acetate + ATP + CoA = acetyl-CoA + AMP + diphosphate. Catalyzes the conversion of acetate into acetyl-CoA (AcCoA), an essential intermediate at the junction of anabolic and catabolic pathways. AcsA undergoes a two-step reaction. In the first half reaction, AcsA combines acetate with ATP to form acetyl-adenylate (AcAMP) intermediate. In the second half reaction, it can then transfer the acetyl group from AcAMP to the sulfhydryl group of CoA, forming the product AcCoA. The protein is Acetyl-coenzyme A synthetase of Xylella fastidiosa (strain Temecula1 / ATCC 700964).